The chain runs to 112 residues: NADH-quinone oxidoreductase subunit K (112 aa).

3 consecutive transmembrane segments (helical) span residues 14-34 (LEGY…GALI), 39-59 (VVVF…LVAF), and 76-96 (LIIA…LAIF).

This sequence belongs to the complex I subunit 4L family. NDH-1 is composed of 14 different subunits. Subunits NuoA, H, J, K, L, M, N constitute the membrane sector of the complex.

The protein resides in the cell membrane. The catalysed reaction is a quinone + NADH + 5 H(+)(in) = a quinol + NAD(+) + 4 H(+)(out). Its function is as follows. NDH-1 shuttles electrons from NADH, via FMN and iron-sulfur (Fe-S) centers, to quinones in the respiratory chain. The immediate electron acceptor for the enzyme in this species is believed to be a menaquinone. Couples the redox reaction to proton translocation (for every two electrons transferred, four hydrogen ions are translocated across the cytoplasmic membrane), and thus conserves the redox energy in a proton gradient. This Rubrobacter xylanophilus (strain DSM 9941 / JCM 11954 / NBRC 16129 / PRD-1) protein is NADH-quinone oxidoreductase subunit K.